Consider the following 240-residue polypeptide: FAS1 domain-containing protein AN1527 (240 aa).

An N-terminal signal peptide occupies residues 1-24 (MRQLSTTALVLFLFFYCSISTAWS). The FAS1 domain occupies 91–239 (EPTISDVLPK…GEVWVIDGVI (149 aa)).

Its subcellular location is the vacuole. The protein is FAS1 domain-containing protein AN1527 of Emericella nidulans (strain FGSC A4 / ATCC 38163 / CBS 112.46 / NRRL 194 / M139) (Aspergillus nidulans).